We begin with the raw amino-acid sequence, 484 residues long: uncharacterized protein (484 aa).

Transmembrane regions (helical) follow at residues 19–39 (LSFG…MIFV), 78–98 (VNWG…WLIV), 110–130 (LFFM…GFII), 134–154 (IFAI…SNYL), 165–185 (FSPF…AGII), 199–219 (IVFL…IILG), 249–269 (TWYW…PFTF), 289–309 (ISVF…TIGL), 321–341 (ISTI…VFVL), 360–380 (LFLF…GVML), 398–418 (FGLI…ITSL), and 440–460 (LGAY…LALL).

It is found in the cell membrane. This is an uncharacterized protein from Mesomycoplasma hyopneumoniae (strain J / ATCC 25934 / NCTC 10110) (Mycoplasma hyopneumoniae).